A 410-amino-acid chain; its full sequence is Cytochrome P450 105A3 (410 aa).

C359 provides a ligand contact to heme.

This sequence belongs to the cytochrome P450 family. Monomer. Requires heme as cofactor.

Functionally, catalyzes the hydroxylation of sodium ML-236B carboxylate to pravastatin. The sequence is that of Cytochrome P450 105A3 (cyp105A3) from Streptomyces carbophilus.